The chain runs to 171 residues: Peptide methionine sulfoxide reductase MsrA (171 aa).

C13 is a catalytic residue.

The protein belongs to the MsrA Met sulfoxide reductase family.

It carries out the reaction L-methionyl-[protein] + [thioredoxin]-disulfide + H2O = L-methionyl-(S)-S-oxide-[protein] + [thioredoxin]-dithiol. The enzyme catalyses [thioredoxin]-disulfide + L-methionine + H2O = L-methionine (S)-S-oxide + [thioredoxin]-dithiol. Its function is as follows. Has an important function as a repair enzyme for proteins that have been inactivated by oxidation. Catalyzes the reversible oxidation-reduction of methionine sulfoxide in proteins to methionine. The polypeptide is Peptide methionine sulfoxide reductase MsrA (Mycobacterium sp. (strain MCS)).